Here is a 416-residue protein sequence, read N- to C-terminus: Lipase A (416 aa).

Positions 1 to 32 (MRLAPQKPLLLSTVLHLLLSIWMLGFASLAGA) are cleaved as a signal peptide. 2 disulfides stabilise this stretch: C67/C391 and C177/C180. The N-linked (GlcNAc...) asparagine glycan is linked to N179. S219 functions as the Nucleophile in the catalytic mechanism. Catalysis depends on charge relay system residues D287 and H381.

The protein belongs to the AB hydrolase superfamily. Lipase family. Glycosylated.

It localises to the secreted. It carries out the reaction Deacetylation of xylans and xylo-oligosaccharides.. The enzyme catalyses a triacylglycerol + H2O = a diacylglycerol + a fatty acid + H(+). Lipolytic enzyme that possesses both lipase and acetylxylan esterase activity. Active towards p-nitrophenol esters of various carbon chain length with preference for medium-chain fatty acids (C-8). Also highly active on the acetylated compounds xylose tetra-acetate and oat spelt xylan. The sequence is that of Lipase A from Sodiomyces alcalophilus (Acremonium alcalophilum).